A 360-amino-acid chain; its full sequence is Endolytic peptidoglycan transglycosylase RlpA (360 aa).

The signal sequence occupies residues 1-17; it reads MRKEWLWVGIASVLLSA. Cysteine 18 carries the N-palmitoyl cysteine lipid modification. The S-diacylglycerol cysteine moiety is linked to residue cysteine 18. In terms of domain architecture, SPOR spans 283–359; it reads SAISGGYVVQ…AQQQSFIVAA (77 aa).

The protein belongs to the RlpA family.

The protein localises to the cell membrane. In terms of biological role, lytic transglycosylase with a strong preference for naked glycan strands that lack stem peptides. The polypeptide is Endolytic peptidoglycan transglycosylase RlpA (Yersinia pestis).